Reading from the N-terminus, the 390-residue chain is T-cell surface glycoprotein CD1e, membrane-associated (390 aa).

Positions 1-14 (MLLLILLFFKGLVC) are cleaved as a signal peptide. A propeptide spans 15 to 33 (HEKSIVGPQPLGWHHPAEA) (removed in sCD1e). 2 N-linked (GlcNAc...) asparagine glycosylation sites follow: asparagine 49 and asparagine 70. Disulfide bonds link cysteine 131–cysteine 194 and cysteine 234–cysteine 288. Positions 215-306 (PEVWLSRGPS…GHDIIIHWGG (92 aa)) constitute an Ig-like domain. The helical transmembrane segment at 305 to 325 (GGYSILLILMYVAVIVTLVTL) threads the bilayer.

Heterodimer with B2M (beta-2-microglobulin). The association with B2M appears to be facilitated by the presence of the propeptide. Mono-ubiquitinated. Post-translationally, proteolytically cleaved in endosomes to yield a soluble form.

It is found in the golgi apparatus membrane. The protein localises to the early endosome. Its subcellular location is the late endosome. It localises to the lysosome lumen. In terms of biological role, T-cell surface glycoprotein CD1e, soluble is required for the presentation of glycolipid antigens on the cell surface. The membrane-associated form is not active. The sequence is that of T-cell surface glycoprotein CD1e, membrane-associated (CD1E) from Cavia porcellus (Guinea pig).